Consider the following 639-residue polypeptide: Probable endo-1,3(4)-beta-glucanase ACLA_073210 (639 aa).

The signal sequence occupies residues 1–21 (MAPSSLLLSVGSLIASSLASA). The 265-residue stretch at 26-290 (IREQSQSYQL…WAGNVFGESG (265 aa)) folds into the GH16 domain. A glycan (N-linked (GlcNAc...) asparagine) is linked at N65. E146 functions as the Nucleophile in the catalytic mechanism. The Proton donor role is filled by E151. Disordered stretches follow at residues 337–384 (TVAS…TVAE) and 442–545 (QSSS…GSSI). Polar residues predominate over residues 339-348 (ASPNTASEVH). Composition is skewed to low complexity over residues 362-376 (PTVPTAAETTVVPPA) and 478-488 (TTTEAVAETET). Residue A617 is the site of GPI-anchor amidated alanine attachment. The propeptide at 618 to 639 (GARKLSVGLSGLVGALAVAALA) is removed in mature form.

Belongs to the glycosyl hydrolase 16 family.

The protein resides in the cell membrane. It catalyses the reaction Endohydrolysis of (1-&gt;3)- or (1-&gt;4)-linkages in beta-D-glucans when the glucose residue whose reducing group is involved in the linkage to be hydrolyzed is itself substituted at C-3.. Mixed-linked glucanase involved in the degradation of complex natural cellulosic substrates. This is Probable endo-1,3(4)-beta-glucanase ACLA_073210 from Aspergillus clavatus (strain ATCC 1007 / CBS 513.65 / DSM 816 / NCTC 3887 / NRRL 1 / QM 1276 / 107).